Consider the following 895-residue polypeptide: Alanine--tRNA ligase (895 aa).

The Zn(2+) site is built by His577, His581, Cys680, and His684.

Belongs to the class-II aminoacyl-tRNA synthetase family. It depends on Zn(2+) as a cofactor.

It localises to the cytoplasm. The enzyme catalyses tRNA(Ala) + L-alanine + ATP = L-alanyl-tRNA(Ala) + AMP + diphosphate. Its function is as follows. Catalyzes the attachment of alanine to tRNA(Ala) in a two-step reaction: alanine is first activated by ATP to form Ala-AMP and then transferred to the acceptor end of tRNA(Ala). Also edits incorrectly charged Ser-tRNA(Ala) and Gly-tRNA(Ala) via its editing domain. This is Alanine--tRNA ligase from Kocuria rhizophila (strain ATCC 9341 / DSM 348 / NBRC 103217 / DC2201).